Consider the following 158-residue polypeptide: MIDHDKLPYRPCAGVMLANRDGRVFVGQRLDTSSEAWQMPQGGIDEGEDAEKAAIRELGEETGIHGGLVDIIARSREEYFYDLPDHLIGKMWGGKYRGQRQHWFLMRFMGEDSDIDIHTRHQEFRAWRWVDLGEIEKLIVPFKRALYRGLIEEFGPLV.

In terms of domain architecture, Nudix hydrolase spans 8-152 (PYRPCAGVML…KRALYRGLIE (145 aa)). Positions 42–63 (GGIDEGEDAEKAAIRELGEETG) match the Nudix box motif.

Belongs to the Nudix hydrolase family. RppH subfamily. The cofactor is a divalent metal cation.

Its function is as follows. Accelerates the degradation of transcripts by removing pyrophosphate from the 5'-end of triphosphorylated RNA, leading to a more labile monophosphorylated state that can stimulate subsequent ribonuclease cleavage. This Sphingopyxis alaskensis (strain DSM 13593 / LMG 18877 / RB2256) (Sphingomonas alaskensis) protein is RNA pyrophosphohydrolase.